The chain runs to 398 residues: Abhydrolase domain-containing protein 2 (398 aa).

Topologically, residues 1–4 are cytoplasmic; the sequence is MSTA. The chain crosses the membrane as a helical; Signal-anchor for type II membrane protein span at residues 5–22; it reads FLTLIAVIVCILFRILNV. At 23–398 the chain is on the extracellular side; that stretch reads HSQPLKPSVW…MMHEVGKVAP (376 aa). The AB hydrolase-1 domain occupies 113–365; the sequence is VAICPGIANS…HGGHLGFYEG (253 aa). Residues S192, D328, and H359 each act as charge relay system in the active site.

This sequence belongs to the AB hydrolase superfamily. AB hydrolase 4 family.

It localises to the membrane. The polypeptide is Abhydrolase domain-containing protein 2 (Hydr2) (Drosophila melanogaster (Fruit fly)).